The sequence spans 372 residues: Cobalt-precorrin-5B C(1)-methyltransferase (372 aa).

The protein belongs to the CbiD family.

It carries out the reaction Co-precorrin-5B + S-adenosyl-L-methionine = Co-precorrin-6A + S-adenosyl-L-homocysteine. It functions in the pathway cofactor biosynthesis; adenosylcobalamin biosynthesis; cob(II)yrinate a,c-diamide from sirohydrochlorin (anaerobic route): step 6/10. Functionally, catalyzes the methylation of C-1 in cobalt-precorrin-5B to form cobalt-precorrin-6A. This chain is Cobalt-precorrin-5B C(1)-methyltransferase, found in Prochlorococcus marinus subsp. pastoris (strain CCMP1986 / NIES-2087 / MED4).